The chain runs to 105 residues: Vacuolar ATPase assembly integral membrane protein VMA21 homolog (105 aa).

Positions 1 to 26 are disordered; sequence MSTKNKKAAGGNGGAPKQTRQQSHDS. The Cytoplasmic portion of the chain corresponds to 1–36; that stretch reads MSTKNKKAAGGNGGAPKQTRQQSHDSQDYSSFKTVL. A helical membrane pass occupies residues 37-57; it reads FYCMLIVFLPVLTFFVLKGFV. Residues 58 to 68 lie on the Lumenal side of the membrane; that stretch reads LDQFLNISEVK. Residues 69–89 form a helical membrane-spanning segment; sequence VNIASAVGAVVALHIALGLYI. The Cytoplasmic portion of the chain corresponds to 90 to 105; sequence YRAYFGAPGSKGSKTD.

The protein belongs to the VMA21 family.

The protein localises to the endoplasmic reticulum membrane. It localises to the endoplasmic reticulum-Golgi intermediate compartment membrane. The protein resides in the cytoplasmic vesicle. It is found in the COPII-coated vesicle membrane. Required for the assembly of the V0 complex of the vacuolar ATPase (V-ATPase) in the endoplasmic reticulum. In Drosophila sechellia (Fruit fly), this protein is Vacuolar ATPase assembly integral membrane protein VMA21 homolog.